We begin with the raw amino-acid sequence, 240 residues long: UDP-2,3-diacylglucosamine hydrolase (240 aa).

5 residues coordinate Mn(2+): aspartate 8, histidine 10, aspartate 41, asparagine 78, and histidine 113. 78-79 serves as a coordination point for substrate; the sequence is NR. Substrate contacts are provided by aspartate 121, serine 159, asparagine 163, lysine 166, and histidine 194. 2 residues coordinate Mn(2+): histidine 194 and histidine 196.

Belongs to the LpxH family. It depends on Mn(2+) as a cofactor.

The protein localises to the cell inner membrane. The catalysed reaction is UDP-2-N,3-O-bis[(3R)-3-hydroxytetradecanoyl]-alpha-D-glucosamine + H2O = 2-N,3-O-bis[(3R)-3-hydroxytetradecanoyl]-alpha-D-glucosaminyl 1-phosphate + UMP + 2 H(+). It functions in the pathway glycolipid biosynthesis; lipid IV(A) biosynthesis; lipid IV(A) from (3R)-3-hydroxytetradecanoyl-[acyl-carrier-protein] and UDP-N-acetyl-alpha-D-glucosamine: step 4/6. Hydrolyzes the pyrophosphate bond of UDP-2,3-diacylglucosamine to yield 2,3-diacylglucosamine 1-phosphate (lipid X) and UMP by catalyzing the attack of water at the alpha-P atom. Involved in the biosynthesis of lipid A, a phosphorylated glycolipid that anchors the lipopolysaccharide to the outer membrane of the cell. The polypeptide is UDP-2,3-diacylglucosamine hydrolase (Shewanella baltica (strain OS185)).